The sequence spans 262 residues: Indole-3-glycerol phosphate synthase (262 aa).

The protein belongs to the TrpC family.

It carries out the reaction 1-(2-carboxyphenylamino)-1-deoxy-D-ribulose 5-phosphate + H(+) = (1S,2R)-1-C-(indol-3-yl)glycerol 3-phosphate + CO2 + H2O. Its pathway is amino-acid biosynthesis; L-tryptophan biosynthesis; L-tryptophan from chorismate: step 4/5. The chain is Indole-3-glycerol phosphate synthase from Clostridium acetobutylicum (strain ATCC 824 / DSM 792 / JCM 1419 / IAM 19013 / LMG 5710 / NBRC 13948 / NRRL B-527 / VKM B-1787 / 2291 / W).